Reading from the N-terminus, the 452-residue chain is Bifunctional protein GlmU (452 aa).

Residues 1-226 are pyrophosphorylase; it reads MSLDIVILAA…AMEVQGANDR (226 aa). Residues 8-11, Lys22, Gln73, 78-79, 99-101, Gly136, Glu151, Asn166, and Asn224 each bind UDP-N-acetyl-alpha-D-glucosamine; these read LAAG, GT, and YGD. Residue Asp101 participates in Mg(2+) binding. Asn224 contacts Mg(2+). Positions 227–247 are linker; sequence IQLAELERHYQLRAARRLMAQ. Residues 248–452 are N-acetyltransferase; sequence GVTLRDPARF…IDGWQRPTKK (205 aa). The UDP-N-acetyl-alpha-D-glucosamine site is built by Arg330 and Lys348. Residue His360 is the Proton acceptor of the active site. UDP-N-acetyl-alpha-D-glucosamine is bound by residues Tyr363 and Asn374. Acetyl-CoA is bound by residues Ala377, 383–384, Ser402, Ala420, and Arg437; that span reads NY.

This sequence in the N-terminal section; belongs to the N-acetylglucosamine-1-phosphate uridyltransferase family. It in the C-terminal section; belongs to the transferase hexapeptide repeat family. As to quaternary structure, homotrimer. Mg(2+) serves as cofactor.

The protein resides in the cytoplasm. The enzyme catalyses alpha-D-glucosamine 1-phosphate + acetyl-CoA = N-acetyl-alpha-D-glucosamine 1-phosphate + CoA + H(+). The catalysed reaction is N-acetyl-alpha-D-glucosamine 1-phosphate + UTP + H(+) = UDP-N-acetyl-alpha-D-glucosamine + diphosphate. Its pathway is nucleotide-sugar biosynthesis; UDP-N-acetyl-alpha-D-glucosamine biosynthesis; N-acetyl-alpha-D-glucosamine 1-phosphate from alpha-D-glucosamine 6-phosphate (route II): step 2/2. The protein operates within nucleotide-sugar biosynthesis; UDP-N-acetyl-alpha-D-glucosamine biosynthesis; UDP-N-acetyl-alpha-D-glucosamine from N-acetyl-alpha-D-glucosamine 1-phosphate: step 1/1. It functions in the pathway bacterial outer membrane biogenesis; LPS lipid A biosynthesis. In terms of biological role, catalyzes the last two sequential reactions in the de novo biosynthetic pathway for UDP-N-acetylglucosamine (UDP-GlcNAc). The C-terminal domain catalyzes the transfer of acetyl group from acetyl coenzyme A to glucosamine-1-phosphate (GlcN-1-P) to produce N-acetylglucosamine-1-phosphate (GlcNAc-1-P), which is converted into UDP-GlcNAc by the transfer of uridine 5-monophosphate (from uridine 5-triphosphate), a reaction catalyzed by the N-terminal domain. The chain is Bifunctional protein GlmU from Stutzerimonas stutzeri (strain A1501) (Pseudomonas stutzeri).